The primary structure comprises 378 residues: MQDFLPFSRPAIGDAEISAVCDVLKSGWITTGPKNHELEQQFCDTFGCQHAVALCSATAGMHVTLLALGIGPGDEVITPSQTWVSTINIITLLGAEPVFVDVDPDTLMTSAELIAPLITANTKAIIPVHYAGAPVDLDPILALARRHGIAVIEDAAHAVGTRYRERWIGASGTAIFSFHAIKNLTCAEGGMLVTDDKALADKVRMLKFHGLGVDAFDRMSLGRKPQAEVITPGFKYNLADINAAIALVQLARLPELNAKRAELVARYQERLAGLPLAPLAVPGYPHLHTWHLFMVRVDPDRCGLDRDQLMQALQERGIGTGLHFRAAHTQKYYRERYPTLSLPHTEWNSSRLCTLPLFPDMTLADVDRVVAALIDILE.

An N6-(pyridoxal phosphate)lysine modification is found at lysine 182.

Belongs to the DegT/DnrJ/EryC1 family. ArnB subfamily. As to quaternary structure, homodimer. It depends on pyridoxal 5'-phosphate as a cofactor.

The enzyme catalyses UDP-4-amino-4-deoxy-beta-L-arabinose + 2-oxoglutarate = UDP-beta-L-threo-pentopyranos-4-ulose + L-glutamate. The protein operates within nucleotide-sugar biosynthesis; UDP-4-deoxy-4-formamido-beta-L-arabinose biosynthesis; UDP-4-deoxy-4-formamido-beta-L-arabinose from UDP-alpha-D-glucuronate: step 2/3. It participates in bacterial outer membrane biogenesis; lipopolysaccharide biosynthesis. Its function is as follows. Catalyzes the conversion of UDP-4-keto-arabinose (UDP-Ara4O) to UDP-4-amino-4-deoxy-L-arabinose (UDP-L-Ara4N). The modified arabinose is attached to lipid A and is required for resistance to polymyxin and cationic antimicrobial peptides. The sequence is that of UDP-4-amino-4-deoxy-L-arabinose--oxoglutarate aminotransferase from Aeromonas hydrophila subsp. hydrophila (strain ATCC 7966 / DSM 30187 / BCRC 13018 / CCUG 14551 / JCM 1027 / KCTC 2358 / NCIMB 9240 / NCTC 8049).